Reading from the N-terminus, the 482-residue chain is tRNA sulfurtransferase (482 aa).

Residues 61–165 (LAIRDALTRI…DDRLLLIKGR (105 aa)) enclose the THUMP domain. ATP contacts are provided by residues 183–184 (LI), Lys265, Gly287, and Gln296. An intrachain disulfide couples Cys344 to Cys456. The 79-residue stretch at 404–482 (FGPNDVILDI…GFENVKAYRP (79 aa)) folds into the Rhodanese domain. The Cysteine persulfide intermediate role is filled by Cys456.

The protein belongs to the ThiI family.

The protein resides in the cytoplasm. It carries out the reaction [ThiI sulfur-carrier protein]-S-sulfanyl-L-cysteine + a uridine in tRNA + 2 reduced [2Fe-2S]-[ferredoxin] + ATP + H(+) = [ThiI sulfur-carrier protein]-L-cysteine + a 4-thiouridine in tRNA + 2 oxidized [2Fe-2S]-[ferredoxin] + AMP + diphosphate. It catalyses the reaction [ThiS sulfur-carrier protein]-C-terminal Gly-Gly-AMP + S-sulfanyl-L-cysteinyl-[cysteine desulfurase] + AH2 = [ThiS sulfur-carrier protein]-C-terminal-Gly-aminoethanethioate + L-cysteinyl-[cysteine desulfurase] + A + AMP + 2 H(+). It participates in cofactor biosynthesis; thiamine diphosphate biosynthesis. Catalyzes the ATP-dependent transfer of a sulfur to tRNA to produce 4-thiouridine in position 8 of tRNAs, which functions as a near-UV photosensor. Also catalyzes the transfer of sulfur to the sulfur carrier protein ThiS, forming ThiS-thiocarboxylate. This is a step in the synthesis of thiazole, in the thiamine biosynthesis pathway. The sulfur is donated as persulfide by IscS. The protein is tRNA sulfurtransferase of Salmonella gallinarum (strain 287/91 / NCTC 13346).